The following is a 395-amino-acid chain: Lipid-A-disaccharide synthase (395 aa).

It belongs to the LpxB family.

The enzyme catalyses a lipid X + a UDP-2-N,3-O-bis[(3R)-3-hydroxyacyl]-alpha-D-glucosamine = a lipid A disaccharide + UDP + H(+). Its pathway is bacterial outer membrane biogenesis; LPS lipid A biosynthesis. Condensation of UDP-2,3-diacylglucosamine and 2,3-diacylglucosamine-1-phosphate to form lipid A disaccharide, a precursor of lipid A, a phosphorylated glycolipid that anchors the lipopolysaccharide to the outer membrane of the cell. The sequence is that of Lipid-A-disaccharide synthase from Bordetella avium (strain 197N).